The chain runs to 336 residues: Nucleoid-associated protein ECA2747 (336 aa).

Positions Lys317–Gln336 are disordered.

Belongs to the YejK family.

Its subcellular location is the cytoplasm. It is found in the nucleoid. The polypeptide is Nucleoid-associated protein ECA2747 (Pectobacterium atrosepticum (strain SCRI 1043 / ATCC BAA-672) (Erwinia carotovora subsp. atroseptica)).